A 463-amino-acid polypeptide reads, in one-letter code: MDYSYDEDLDELCPVCGDKVSGYHYGLLTCESCKGFFKRTVQNNKHYTCTESQNCKIDKTQRKRCPYCRFQKCLTVGMRLEAVRADRMRGGRNKFGPMYKRDRALKQQKKALIRANGFKLETGPSMGPPPQTDYPLAPALHPGAKGLAPAPPAGPPGDYERGPYGPPGVPMAVPTHGPLAGYLYPAFPGRAIKSEYPEPYASPHEPAPPYGYPEPYPSGPGLPGVPELILKLLQLEPDEGQLKARILACLQEPSKGRPDRPTPFGLMCKMADQTLFSIVEWARSCVVFKELEVADQMKLLQNCWSELLVFDHIYRQIQHGKEGSILLVTGQEVDLSTVAAQAGSLLHSLVLRAQDLVQQLHSLQVDRQEFVCLKFLILFSLDVKFLENHGLAKDAQEKANSALLEYTMCHYPHCGDKFRQLLLRLAEVRSLSMQAEEYLYHKHLGGEVPCNNLLIEMLHAKRT.

Positions 10–85 (DELCPVCGDK…VGMRLEAVRA (76 aa)) form a DNA-binding region, nuclear receptor. Residues 13–33 (CPVCGDKVSGYHYGLLTCESC) form an NR C4-type zinc finger. Lys-34, Lys-38, and Lys-72 each carry N6-acetyllysine. An NR C4-type zinc finger spans residues 49–73 (CTESQNCKIDKTQRKRCPYCRFQKC). Lys-119 participates in a covalent cross-link: Glycyl lysine isopeptide (Lys-Gly) (interchain with G-Cter in SUMO). Residues 119–160 (KLETGPSMGPPPQTDYPLAPALHPGAKGLAPAPPAGPPGDYE) are disordered. Positions 135–148 (PLAPALHPGAKGLA) are enriched in low complexity. Residue Lys-193 forms a Glycyl lysine isopeptide (Lys-Gly) (interchain with G-Cter in SUMO) linkage. A disordered region spans residues 197-216 (PEPYASPHEPAPPYGYPEPY). Ser-202 carries the phosphoserine; by CDK7 modification. The span at 205 to 216 (EPAPPYGYPEPY) shows a compositional bias: pro residues. Positions 224 to 461 (GVPELILKLL…NLLIEMLHAK (238 aa)) constitute an NR LBD domain. Gly-343, Tyr-438, and Lys-442 together coordinate a 1,2-diacyl-sn-glycero-3-phosphocholine.

Belongs to the nuclear hormone receptor family. NR5 subfamily. Binds DNA as a monomer. Part of a complex consisting of SFPQ, NONO and NR5A1. Interacts with NR0B2, NCOA2 and PPARGC1A. Interacts with DGKQ and CDK7. Binds to and activated by HIPK3. In terms of processing, acetylation stimulates the transcriptional activity. Post-translationally, sumoylation reduces CDK7-mediated phosphorylation on Ser-202. Phosphorylated on Ser-202 by CDK7. This phosphorylation promotes transcriptional activity. In terms of tissue distribution, expressed in the pre-granulosa and Sertoli cells of the ovary and testis, respectively. In the testis it is also present in the interstitial cells. In the adult ovary it is expressed in the interstitial gland, and in the granulosa cells and theca interna of small to medium-sized antral follicles, but is not expressed in large antral follicles.

It is found in the nucleus. Its function is as follows. Transcriptional activator. Seems to be essential for sexual differentiation and formation of the primary steroidogenic tissues. Binds to the Ad4 site found in the promoter region of steroidogenic P450 genes such as CYP11A, CYP11B and CYP21B. Also regulates the AMH/Muellerian inhibiting substance gene as well as the AHCH and STAR genes. 5'-YCAAGGYC-3' and 5'-RRAGGTCA-3' are the consensus sequences for the recognition by NR5A1. The SFPQ-NONO-NR5A1 complex binds to the CYP17 promoter and regulates basal and cAMP-dependent transcriptional activity. Binds phosphatidylcholine and phospholipids with a phosphatidylinositol (PI) headgroup, in particular PI(3,4)P2 and PI(3,4,5)P3. Activated by the phosphorylation of NR5A1 by HIPK3 leading to increased steroidogenic gene expression upon cAMP signaling pathway stimulation. This chain is Steroidogenic factor 1 (NR5A1), found in Notamacropus eugenii (Tammar wallaby).